A 1804-amino-acid chain; its full sequence is MEPWSRWKTKRWIWDLTISTLVLTFLFQAREVRGAAPVDILKALDFHNSPVGISKTTGFCTSRKNSKDPDIAYRVTEEAQISAPTKQLFPGGIFPQDFSILFTIKPKKGTQAFLLSLYNEHGIQQLGVEVGRSPVFLFEDHTGKPTPENYPLFSTVNIADGKWHRVAISVEKKTVTMIVDCKKKITKPLDRSERSIVDTNGIMVFGTRILETDVFQGDIQQFLITGDPKAAYDYCDHYSPDCDLTSKAAQAQEPHIDEYAPEDIIEYDYEYGETDYKEAESVTEMPTVTEETVAQTEANIVDDFQDYNYGTMETYQTESPRRVSGSNEPNPVEEGFTEEYLTGEDYDVQRNISEDILYGNKGIDGRDSDLLVDGDLGEYDFYEYKEYEERTTTSPNEEFGPGVPAETDFTETSINGHGAYGEKGQKGEPAVVEPGMLVEGPPGPAGPAGLMGPPGLQGPSGLPGDPGDRGPPGRPGLPGADGLPGPPGTMLMLPFRYGGDGSKGPTISAQEAQAQAILQQARIALRGPPGPMGLTGRPGPVGGPGSAGAKGESGDPGPQGPRGVQGPPGPTGKPGKRGRPGADGGRGMPGEPGSKGDRGFDGLPGLPGDKGHRGERGPQGPPGLPGDDGMRGEDGEIGPRGLPGEAGPRGLLGPRGTPGPPGQPGIGGIDGPQGPKGNMGPQGEPGPPGQQGNPGPQGLPGPQGPIGPPGEKGPQGKPGLAGLPGADGPPGHPGKEGQSGEKGALGPPGPQGPIGYPGPRGVKGADGVRGLKGSKGEKGEDGFPGFKGDMGLKGDRGEVGQVGPRGEDGPEGPKGRAGPTGDPGPSGQAGEKGKLGVPGLPGYPGRQGPKGSTGFPGFPGANGEKGARGIAGKPGPRGQRGPTGPRGSRGARGPTGKPGPKGTSGGDGPPGPPGERGPQGPQGPVGFPGPKGPPGPAGKDGLPGHPGQRGETGFQGKTGPPGPGGVVGPQGPTGETGPIGERGHPGTPGPPGEQGLPGAAGKEGAKGDPGPQGISGKDGPAGIRGFPGERGLPGAQGAPGLKGGEGPQGPQGPIGSPGERGSAGTAGPIGLPGRPGPQGPPGPAGEKGAPGEKGPQGPAGRDGVQGPVGLPGPAGPAGSPGEDGDKGEIGEPGQKGSKGDKGENGPPGPPGLQGPVGAPGIAGGDGEAGPRGQQGMFGQKGDEGARGFPGPPGPIGLQGLPGPPGEKGENGDVGPMGPPGPPGPRGPQGPNGADGPQGPPGSIGSVGGVGEKGEPGEAGNPGPPGEAGSGGPKGERGEKGEAGPPGAAGPPGIKGPPGDDGPKGNPGPVGFPGDPGPPGEPGPAGQDGVGGDKGEDGDPGQPGPPGPSGEAGPPGPPGKRGPPGASGSEGRQGEKGAKGEAGAEGPPGKTGPVGPQGPSGKPGPEGLRGIPGPVGEQGLPGAAGQDGPPGPLGPPGLPGLKGDPGSKGEKGHPGLIGLIGPPGEQGEKGDRGLPGTQGSPGAKGDGGIPGPAGPIGPPGPPGLPGPAGPKGNKGSSGPTGQKGDSGMPGPPGPPGPPGEVIQPLPILSPKKTRRHTESIQADAGDNILDYSDGMEEIFGSLNSLKQDIEHMKFPMGTQTNPARTCKDLQLSHPDFPDGEYWIDPNQGCSGDSFKVYCNFTAGGETCIYPDKKSEGVRLSSWPKEKPGSWYSEFKRGKLLSYLDVEGNSINMVQMTFLKLLTASARQNFTYNCHQSTAWYDVLSGSYDKALRFLGSNDEEMSYENNPHIKALYDGCASRKGYEKTVIEINTPKIDQVPIIDVMINDFGDQNQKFGFEVGPACFLG.

A signal peptide spans 1–34 (MEPWSRWKTKRWIWDLTISTLVLTFLFQAREVRG). Residues 35 to 511 (AAPVDILKAL…SKGPTISAQE (477 aa)) constitute a propeptide, N-terminal propeptide. Intrachain disulfides connect Cys60-Cys242 and Cys181-Cys235. In terms of domain architecture, Laminin G-like spans 70 to 242 (DIAYRVTEEA…DYCDHYSPDC (173 aa)). Residues 229-417 (KAAYDYCDHY…DFTETSINGH (189 aa)) are nonhelical region. Asn351 carries N-linked (GlcNAc...) asparagine glycosylation. Positions 418–506 (GAYGEKGQKG…YGGDGSKGPT (89 aa)) are triple-helical region (interrupted). Positions 437-506 (LVEGPPGPAG…YGGDGSKGPT (70 aa)) are disordered. Residues 440-488 (GPPGPAGPAGLMGPPGLQGPSGLPGDPGDRGPPGRPGLPGADGLPGPPG) enclose the Collagen-like 1 domain. 2 stretches are compositionally biased toward low complexity: residues 447–465 (PAGLMGPPGLQGPSGLPGD) and 477–494 (LPGADGLPGPPGTMLMLP). A short nonhelical segment region spans residues 507–509 (ISA). The interval 510-527 (QEAQAQAILQQARIALRG) is telopeptide. The segment at 526–1560 (RGPPGPMGLT…KTRRHTESIQ (1035 aa)) is disordered. A triple-helical region region spans residues 528–1540 (PPGPMGLTGR…PGPPGPPGEV (1013 aa)). Collagen-like domains follow at residues 530 to 584 (GPMG…GADG), 581 to 639 (GADG…EIGP), 607 to 664 (PGDK…PGQP), and 641 to 698 (GLPG…GPQG). Gly residues-rich tracts occupy residues 539–548 (GPVGGPGSAG) and 581–590 (GADGGRGMPG). The residue at position 610 (Lys610) is an Allysine. Residues 639 to 655 (PRGLPGEAGPRGLLGPR) are compositionally biased toward low complexity. Residues 697–708 (QGLPGPQGPIGP) are compositionally biased toward pro residues. Low complexity predominate over residues 715-726 (QGKPGLAGLPGA). One can recognise a Collagen-like 6 domain in the interval 746–804 (GPPGPQGPIGYPGPRGVKGADGVRGLKGSKGEKGEDGFPGFKGDMGLKGDRGEVGQVGP). The span at 805-814 (RGEDGPEGPK) shows a compositional bias: basic and acidic residues. 3 stretches are compositionally biased toward low complexity: residues 873 to 901 (KPGPRGQRGPTGPRGSRGARGPTGKPGPK), 916 to 925 (RGPQGPQGPV), and 969 to 979 (PQGPTGETGPI). The segment covering 1040–1049 (GLKGGEGPQG) has biased composition (gly residues). The segment covering 1074–1083 (RPGPQGPPGP) has biased composition (pro residues). The segment covering 1084-1108 (AGEKGAPGEKGPQGPAGRDGVQGPV) has biased composition (low complexity). The segment covering 1160-1169 (GIAGGDGEAG) has biased composition (gly residues). 2 stretches are compositionally biased toward pro residues: residues 1216-1227 (MGPPGPPGPRGP) and 1341-1360 (QPGPPGPSGEAGPPGPPGKR). Low complexity-rich tracts occupy residues 1383 to 1392 (AEGPPGKTGP) and 1417 to 1426 (QGLPGAAGQD). Collagen-like domains are found at residues 1391-1449 (GPVG…SKGE), 1442-1492 (GDPG…PGPA), and 1481-1539 (GAKG…PPGE). Positions 1428-1437 (PPGPLGPPGL) are enriched in pro residues. At Lys1450 the chain carries Allysine. Residues 1453–1462 (PGLIGLIGPP) show a composition bias toward low complexity. Over residues 1481–1490 (GAKGDGGIPG) the composition is skewed to gly residues. Residues 1491–1507 (PAGPIGPPGPPGLPGPA) are compositionally biased toward pro residues. The segment covering 1509 to 1519 (PKGNKGSSGPT) has biased composition (low complexity). Residues 1528–1537 (PGPPGPPGPP) are compositionally biased toward pro residues. The segment at 1541–1561 (IQPLPILSPKKTRRHTESIQA) is nonhelical region (C-terminal). Residues 1562–1804 (DAGDNILDYS…FEVGPACFLG (243 aa)) constitute a propeptide, C-terminal propeptide. Residues 1575-1803 (EEIFGSLNSL…GFEVGPACFL (229 aa)) form the Fibrillar collagen NC1 domain. A disulfide bridge connects residues Cys1605 and Cys1637. Ca(2+)-binding residues include Asp1623, Asn1625, Gln1626, Cys1628, and Asp1631. N-linked (GlcNAc...) asparagine glycosylation is found at Asn1638 and Asn1707. Disulfide bonds link Cys1646-Cys1801 and Cys1712-Cys1755.

Belongs to the fibrillar collagen family. In terms of assembly, trimers composed of three different chains: alpha 1(XI), alpha 2(XI), and alpha 3(XI). Alpha 3(XI) is probably a post-translational modification of alpha 1(II). Post-translationally, prolines at the third position of the tripeptide repeating unit (G-X-Y) are hydroxylated in some or all of the chains. N-glycosylated.

The protein resides in the secreted. It is found in the extracellular space. Its subcellular location is the extracellular matrix. Its function is as follows. May play an important role in fibrillogenesis by controlling lateral growth of collagen II fibrils. This Rattus norvegicus (Rat) protein is Collagen alpha-1(XI) chain (Col11a1).